An 837-amino-acid chain; its full sequence is Tuftelin-interacting protein 11 (837 aa).

Basic and acidic residues-rich tracts occupy residues 1–13 (MSLS…GEGR) and 53–64 (VWAERDSDDERP). Disordered stretches follow at residues 1–21 (MSLS…DDER), 53–72 (VWAE…KRAR), and 85–133 (LKKG…KGFA). 3 positions are modified to phosphoserine: Ser-2, Ser-59, and Ser-98. Positions 91–102 (EEAELEDSDDEE) are enriched in acidic residues. Positions 103–116 (RPVKQDDFPKDFGP) are enriched in basic and acidic residues. At Ser-144 the chain carries Phosphoserine. One can recognise a G-patch domain in the interval 149 to 195 (TKGIGQKLLQKMGYVPGRGLGKNAQGIINPIEAKQRKGKGAVGAYGS). Residues 179 to 236 (IEAKQRKGKGAVGAYGSERTTQSMQDFPVVDSEEEAEEEFQKGLSQWRKDPSGSKKKP) form a disordered region. Ser-210 is modified (phosphoserine). Residues 700 to 705 (VKDKFN) carry the Nuclear localization signal motif. The required for nuclear speckle localization stretch occupies residues 710–734 (IMNRAVSSNVGAYMQPGARENIAYL).

Belongs to the TFP11/STIP family. In terms of assembly, identified in the spliceosome C complex. Found in the Intron Large (IL) complex, a post-mRNA release spliceosomal complex containing the excised intron, U2, U5 and U6 snRNPs, and splicing factors. Interacts with TUFT1. Interacts with DHX15; indicative for a recruitment of DHX15 to the IL complex. Interacts with GCFC2.

Its subcellular location is the cytoplasm. It is found in the nucleus. In terms of biological role, involved in pre-mRNA splicing, specifically in spliceosome disassembly during late-stage splicing events. Intron turnover seems to proceed through reactions in two lariat-intron associated complexes termed Intron Large (IL) and Intron Small (IS). In cooperation with DHX15 seems to mediate the transition of the U2, U5 and U6 snRNP-containing IL complex to the snRNP-free IS complex leading to efficient debranching and turnover of excised introns. May play a role in the differentiation of ameloblasts and odontoblasts or in the forming of the enamel extracellular matrix. The polypeptide is Tuftelin-interacting protein 11 (TFIP11) (Macaca fascicularis (Crab-eating macaque)).